Reading from the N-terminus, the 310-residue chain is Probable manganese-dependent inorganic pyrophosphatase (310 aa).

Mn(2+)-binding residues include H9, D13, D15, D76, H98, and D150.

The protein belongs to the PPase class C family. Homodimer. It depends on Mn(2+) as a cofactor.

The protein resides in the cytoplasm. It catalyses the reaction diphosphate + H2O = 2 phosphate + H(+). The sequence is that of Probable manganese-dependent inorganic pyrophosphatase (ppaC) from Streptococcus mutans serotype c (strain ATCC 700610 / UA159).